A 712-amino-acid chain; its full sequence is Ribosomal RNA large subunit methyltransferase K/L (712 aa).

Residues G46–L157 form the THUMP domain.

It belongs to the methyltransferase superfamily. RlmKL family.

It localises to the cytoplasm. The enzyme catalyses guanosine(2445) in 23S rRNA + S-adenosyl-L-methionine = N(2)-methylguanosine(2445) in 23S rRNA + S-adenosyl-L-homocysteine + H(+). It carries out the reaction guanosine(2069) in 23S rRNA + S-adenosyl-L-methionine = N(2)-methylguanosine(2069) in 23S rRNA + S-adenosyl-L-homocysteine + H(+). Its function is as follows. Specifically methylates the guanine in position 2445 (m2G2445) and the guanine in position 2069 (m7G2069) of 23S rRNA. This chain is Ribosomal RNA large subunit methyltransferase K/L, found in Actinobacillus pleuropneumoniae serotype 5b (strain L20).